Reading from the N-terminus, the 358-residue chain is Phosphoserine aminotransferase (358 aa).

R43 contacts L-glutamate. Residues W103, T153, D172, and Q195 each contribute to the pyridoxal 5'-phosphate site. N6-(pyridoxal phosphate)lysine is present on K196. 236-237 (NT) contributes to the pyridoxal 5'-phosphate binding site.

The protein belongs to the class-V pyridoxal-phosphate-dependent aminotransferase family. SerC subfamily. As to quaternary structure, homodimer. It depends on pyridoxal 5'-phosphate as a cofactor.

It localises to the cytoplasm. It carries out the reaction O-phospho-L-serine + 2-oxoglutarate = 3-phosphooxypyruvate + L-glutamate. It catalyses the reaction 4-(phosphooxy)-L-threonine + 2-oxoglutarate = (R)-3-hydroxy-2-oxo-4-phosphooxybutanoate + L-glutamate. The protein operates within amino-acid biosynthesis; L-serine biosynthesis; L-serine from 3-phospho-D-glycerate: step 2/3. Its pathway is cofactor biosynthesis; pyridoxine 5'-phosphate biosynthesis; pyridoxine 5'-phosphate from D-erythrose 4-phosphate: step 3/5. Catalyzes the reversible conversion of 3-phosphohydroxypyruvate to phosphoserine and of 3-hydroxy-2-oxo-4-phosphonooxybutanoate to phosphohydroxythreonine. This chain is Phosphoserine aminotransferase, found in Dichelobacter nodosus (strain VCS1703A).